The sequence spans 186 residues: uncharacterized protein (186 aa).

The tract at residues 121-146 is disordered; it reads TSPLLKKNKPSSDQDDTSKQSFDQDE.

Belongs to the chlamydial CPn_0422/CT_273/TC_0545 family.

This is an uncharacterized protein from Chlamydia muridarum (strain MoPn / Nigg).